The chain runs to 862 residues: Leucine--tRNA ligase (862 aa).

The short motif at 49–59 (PYPSGRIHMGH) is the 'HIGH' region element. Residues 625–629 (KMSKS) carry the 'KMSKS' region motif. K628 is an ATP binding site.

This sequence belongs to the class-I aminoacyl-tRNA synthetase family.

It localises to the cytoplasm. The enzyme catalyses tRNA(Leu) + L-leucine + ATP = L-leucyl-tRNA(Leu) + AMP + diphosphate. The chain is Leucine--tRNA ligase from Paramagnetospirillum magneticum (strain ATCC 700264 / AMB-1) (Magnetospirillum magneticum).